A 90-amino-acid polypeptide reads, in one-letter code: Small ribosomal subunit protein bS16 (90 aa).

The protein belongs to the bacterial ribosomal protein bS16 family.

The sequence is that of Small ribosomal subunit protein bS16 from Streptococcus pneumoniae serotype 19F (strain G54).